Consider the following 36-residue polypeptide: Protein YibY (36 aa).

This chain is Protein YibY, found in Escherichia coli (strain K12).